Reading from the N-terminus, the 811-residue chain is Ent-13-epi-manoyl oxide synthase KSL2, chloroplastic (811 aa).

The N-terminal 49 residues, 1–49, are a transit peptide targeting the chloroplast; it reads MALPLSTCLLFHPKESRSRRFCFSPASAASLKSGLHSATSAKIASMPTC. Residues D550, D554, N694, and E702 each coordinate Mg(2+). The short motif at 550–554 is the DDXXD motif element; that stretch reads DDFFD.

Belongs to the terpene synthase family. The cofactor is Mg(2+).

It localises to the plastid. The protein resides in the chloroplast. The catalysed reaction is ent-8alpha-hydroxylabd-13-en-15-yl diphosphate = ent-13-epi-manoyl oxide + diphosphate. Its pathway is secondary metabolite biosynthesis; terpenoid biosynthesis. Its function is as follows. Involved in diterpenoid biosynthesis. Catalyzes the conversion of ent-8alpha-hydroxylabd-13-en-15-yl diphosphate to ent-13-epi-manoyl oxide. This is Ent-13-epi-manoyl oxide synthase KSL2, chloroplastic from Salvia miltiorrhiza (Chinese sage).